The primary structure comprises 110 residues: Large ribosomal subunit protein uL22 (110 aa).

The protein belongs to the universal ribosomal protein uL22 family. In terms of assembly, part of the 50S ribosomal subunit.

Its function is as follows. This protein binds specifically to 23S rRNA; its binding is stimulated by other ribosomal proteins, e.g. L4, L17, and L20. It is important during the early stages of 50S assembly. It makes multiple contacts with different domains of the 23S rRNA in the assembled 50S subunit and ribosome. The globular domain of the protein is located near the polypeptide exit tunnel on the outside of the subunit, while an extended beta-hairpin is found that lines the wall of the exit tunnel in the center of the 70S ribosome. The protein is Large ribosomal subunit protein uL22 of Saccharophagus degradans (strain 2-40 / ATCC 43961 / DSM 17024).